The chain runs to 485 residues: Rop guanine nucleotide exchange factor 2 (485 aa).

The disordered stretch occupies residues 1 to 36; that stretch reads MENLPNHEENDDVGYHQSPGPIDPNDHSASETPVYS. In terms of domain architecture, PRONE spans 107-485; sequence LAVQEISEPE…YVDKTMRGEE (379 aa).

In terms of assembly, interacts with ARC10/ROP11. As to expression, expressed in the vascular tissues of roots, leaves, sepals, petals and siliques.

In terms of biological role, guanine-nucleotide exchange factor (GEF) that acts as an activator of Rop (Rho of plants) GTPases by promoting the exchange of GDP for GTP. This chain is Rop guanine nucleotide exchange factor 2 (ROPGEF2), found in Arabidopsis thaliana (Mouse-ear cress).